The sequence spans 30 residues: Dermaseptin-3.4TR (30 aa).

As to expression, expressed by the skin glands.

Its subcellular location is the secreted. In terms of biological role, has antimicrobial activity. This is Dermaseptin-3.4TR from Phyllomedusa trinitatis (Trinidad leaf frog).